Consider the following 86-residue polypeptide: Large ribosomal subunit protein bL31B (86 aa).

It belongs to the bacterial ribosomal protein bL31 family. Type B subfamily. In terms of assembly, part of the 50S ribosomal subunit.

In Erwinia tasmaniensis (strain DSM 17950 / CFBP 7177 / CIP 109463 / NCPPB 4357 / Et1/99), this protein is Large ribosomal subunit protein bL31B.